We begin with the raw amino-acid sequence, 180 residues long: Large ribosomal subunit protein uL6 (180 aa).

Belongs to the universal ribosomal protein uL6 family. Part of the 50S ribosomal subunit.

This protein binds to the 23S rRNA, and is important in its secondary structure. It is located near the subunit interface in the base of the L7/L12 stalk, and near the tRNA binding site of the peptidyltransferase center. This chain is Large ribosomal subunit protein uL6, found in Protochlamydia amoebophila (strain UWE25).